The primary structure comprises 168 residues: uncharacterized protein (168 aa).

A compositionally biased stretch (pro residues) spans 1–10; that stretch reads MSPTTGPQPN. Disordered stretches follow at residues 1–23 and 117–143; these read MSPT…TGPQ and EPGN…RGPQ.

This is an uncharacterized protein from Homo sapiens (Human).